The following is a 420-amino-acid chain: Fasciclin-like arabinogalactan protein 8 (420 aa).

The signal sequence occupies residues 1 to 25 (MAASQTFSLLAFTFSLLAFASTVSS). FAS1 domains are found at residues 26–172 (HNIT…DAPI) and 186–326 (SLSN…DNVL). Asn-27, Asn-128, Asn-162, Asn-189, and Asn-273 each carry an N-linked (GlcNAc...) asparagine glycan. The interval 335 to 394 (SKSPSPAPAPEPVTAPTPSPADAPSPTAASPPAPPTDESPESAPSDSPTGSANSKSANAA) is disordered. A compositionally biased stretch (pro residues) spans 339 to 371 (SPAPAPEPVTAPTPSPADAPSPTAASPPAPPTD). Asn-392 is lipidated: GPI-anchor amidated asparagine. Residues 393 to 420 (AAVGVSTPSLFTALVTIAAIAVSVSLCS) constitute a propeptide, removed in mature form.

It belongs to the fasciclin-like AGP family. Expressed mainly in flowers and to a lesser extent in leaves and roots.

It is found in the cell membrane. Its function is as follows. May be a cell surface adhesion protein. The protein is Fasciclin-like arabinogalactan protein 8 (FLA8) of Arabidopsis thaliana (Mouse-ear cress).